The sequence spans 259 residues: Thiazole synthase (259 aa).

The active-site Schiff-base intermediate with DXP is lysine 98. 1-deoxy-D-xylulose 5-phosphate is bound by residues glycine 159, 185–186 (AG), and 207–208 (NS).

Belongs to the ThiG family. As to quaternary structure, homotetramer. Forms heterodimers with either ThiH or ThiS.

It localises to the cytoplasm. It catalyses the reaction [ThiS sulfur-carrier protein]-C-terminal-Gly-aminoethanethioate + 2-iminoacetate + 1-deoxy-D-xylulose 5-phosphate = [ThiS sulfur-carrier protein]-C-terminal Gly-Gly + 2-[(2R,5Z)-2-carboxy-4-methylthiazol-5(2H)-ylidene]ethyl phosphate + 2 H2O + H(+). It functions in the pathway cofactor biosynthesis; thiamine diphosphate biosynthesis. Catalyzes the rearrangement of 1-deoxy-D-xylulose 5-phosphate (DXP) to produce the thiazole phosphate moiety of thiamine. Sulfur is provided by the thiocarboxylate moiety of the carrier protein ThiS. In vitro, sulfur can be provided by H(2)S. The protein is Thiazole synthase of Chlorobium phaeobacteroides (strain DSM 266 / SMG 266 / 2430).